The primary structure comprises 298 residues: Isochorismatase domain-containing protein 1 (298 aa).

Tyr-160 carries the post-translational modification Phosphotyrosine. Residue Lys-279 is modified to N6-succinyllysine.

The protein belongs to the isochorismatase family.

The protein is Isochorismatase domain-containing protein 1 (ISOC1) of Homo sapiens (Human).